The sequence spans 98 residues: DNA-binding protein Fis (98 aa).

Positions glutamine 74–lysine 93 form a DNA-binding region, H-T-H motif.

Belongs to the transcriptional regulatory Fis family. As to quaternary structure, homodimer.

Activates ribosomal RNA transcription. Plays a direct role in upstream activation of rRNA promoters. The polypeptide is DNA-binding protein Fis (Glaesserella parasuis serovar 5 (strain SH0165) (Haemophilus parasuis)).